A 247-amino-acid polypeptide reads, in one-letter code: Adenosylcobinamide-GDP ribazoletransferase (247 aa).

A run of 5 helical transmembrane segments spans residues 34–54 (IITF…VFMV), 59–79 (CGAP…TGGF), 113–133 (GGLA…ELAL), 138–158 (ILAS…LLMY), and 194–214 (VLLP…AIFI).

Belongs to the CobS family. Requires Mg(2+) as cofactor.

It localises to the cell inner membrane. The enzyme catalyses alpha-ribazole + adenosylcob(III)inamide-GDP = adenosylcob(III)alamin + GMP + H(+). The catalysed reaction is alpha-ribazole 5'-phosphate + adenosylcob(III)inamide-GDP = adenosylcob(III)alamin 5'-phosphate + GMP + H(+). The protein operates within cofactor biosynthesis; adenosylcobalamin biosynthesis; adenosylcobalamin from cob(II)yrinate a,c-diamide: step 7/7. Its function is as follows. Joins adenosylcobinamide-GDP and alpha-ribazole to generate adenosylcobalamin (Ado-cobalamin). Also synthesizes adenosylcobalamin 5'-phosphate from adenosylcobinamide-GDP and alpha-ribazole 5'-phosphate. This is Adenosylcobinamide-GDP ribazoletransferase from Escherichia coli O157:H7.